The following is a 337-amino-acid chain: Heme A synthase (337 aa).

5 helical membrane-spanning segments follow: residues 6 to 26 (ITKW…IGGI), 87 to 107 (FIHR…LIYF), 119 to 139 (LPYI…WYMV), 154 to 174 (LAFH…QLIK), and 192 to 212 (LIFS…GALV). H256 is a heme binding site. 3 helical membrane passes run 258–278 (LGGY…LKIE), 285–305 (IAYF…ITLL), and 308–328 (VPII…SIII). Position 316 (H316) interacts with heme.

The protein belongs to the COX15/CtaA family. Type 2 subfamily. Interacts with CtaB. Requires heme b as cofactor.

The protein resides in the cell membrane. The catalysed reaction is Fe(II)-heme o + 2 A + H2O = Fe(II)-heme a + 2 AH2. It functions in the pathway porphyrin-containing compound metabolism; heme A biosynthesis; heme A from heme O: step 1/1. Functionally, catalyzes the conversion of heme O to heme A by two successive hydroxylations of the methyl group at C8. The first hydroxylation forms heme I, the second hydroxylation results in an unstable dihydroxymethyl group, which spontaneously dehydrates, resulting in the formyl group of heme A. In Rickettsia massiliae (strain Mtu5), this protein is Heme A synthase.